The sequence spans 447 residues: MIKIYDTLTRSLREFVPIHENTVNMYVCGPTVYNYIHVGNGRSAIAFDTIRRYFEYRGYTVNYISNFTDVDDKIIKAAAKAGMTTKALSDKFIAAFKEDVAALGVKPATENPRVIDYMQDIIDFVQILVDKGFAYESSGDVYFRVRKSDNYAALANKTLEELEIGASGRVDAESDCKEDPLDFALWKAAKEGEIAWDSPWGAGRPGWHIECSVMATTILGDTIDIHGGGADLEFPHHTNEIAQSEAKTGKKFANYWMHNGFVNIDNEKMSKSLGNFITVHDALKTMDGQVLRFFFATQHYRKPFNFTEKAIRDAEINLKYLKNTYEQPFTATVDEAVFARFLEKFQAAMDEDFNTANGITVVFELAKWINSGHYDQTVKDKFAEILQIFGVVFKEEVLDAEIEKLIEERQKARAARDFTKADAIRDDLAAQGIKLLDTKDGVRWMRD.

A Zn(2+)-binding site is contributed by Cys28. A 'HIGH' region motif is present at residues 30-40 (PTVYNYIHVGN). Residues Cys211, His236, and Glu240 each contribute to the Zn(2+) site. Residues 268-272 (KMSKS) carry the 'KMSKS' region motif. Lys271 lines the ATP pocket.

It belongs to the class-I aminoacyl-tRNA synthetase family. As to quaternary structure, monomer. Zn(2+) is required as a cofactor.

The protein localises to the cytoplasm. It carries out the reaction tRNA(Cys) + L-cysteine + ATP = L-cysteinyl-tRNA(Cys) + AMP + diphosphate. This is Cysteine--tRNA ligase from Streptococcus mutans serotype c (strain ATCC 700610 / UA159).